Consider the following 628-residue polypeptide: 1-deoxy-D-xylulose-5-phosphate synthase (628 aa).

Residues histidine 72 and 113-115 contribute to the thiamine diphosphate site; that span reads GHA. A Mg(2+)-binding site is contributed by aspartate 144. Thiamine diphosphate-binding positions include 145 to 146, asparagine 174, tyrosine 287, and glutamate 370; that span reads GA. Position 174 (asparagine 174) interacts with Mg(2+).

This sequence belongs to the transketolase family. DXPS subfamily. As to quaternary structure, homodimer. Mg(2+) serves as cofactor. Thiamine diphosphate is required as a cofactor.

It catalyses the reaction D-glyceraldehyde 3-phosphate + pyruvate + H(+) = 1-deoxy-D-xylulose 5-phosphate + CO2. The protein operates within metabolic intermediate biosynthesis; 1-deoxy-D-xylulose 5-phosphate biosynthesis; 1-deoxy-D-xylulose 5-phosphate from D-glyceraldehyde 3-phosphate and pyruvate: step 1/1. In terms of biological role, catalyzes the acyloin condensation reaction between C atoms 2 and 3 of pyruvate and glyceraldehyde 3-phosphate to yield 1-deoxy-D-xylulose-5-phosphate (DXP). The sequence is that of 1-deoxy-D-xylulose-5-phosphate synthase from Prochlorococcus marinus (strain NATL2A).